A 734-amino-acid polypeptide reads, in one-letter code: 1,4-alpha-glucan branching enzyme GlgB (734 aa).

The active-site Nucleophile is Asp414. The Proton donor role is filled by Glu467.

This sequence belongs to the glycosyl hydrolase 13 family. GlgB subfamily. Monomer.

The enzyme catalyses Transfers a segment of a (1-&gt;4)-alpha-D-glucan chain to a primary hydroxy group in a similar glucan chain.. It participates in glycan biosynthesis; glycogen biosynthesis. Functionally, catalyzes the formation of the alpha-1,6-glucosidic linkages in glycogen by scission of a 1,4-alpha-linked oligosaccharide from growing alpha-1,4-glucan chains and the subsequent attachment of the oligosaccharide to the alpha-1,6 position. The protein is 1,4-alpha-glucan branching enzyme GlgB of Myxococcus xanthus (strain DK1622).